Reading from the N-terminus, the 500-residue chain is MPLMDVHWLIYVAFGAWLCSYVIHVLSSSSTVKVPVVGYRSVFEPTWLLRLRFVWEGGSIIGQGYNKFKDSIFQVRKLGTDIVIIPPNYIDEVRKLSQDKTRSVEPFINDFAGQYTRGMVFLQSDLQNRVIQQRLTPKLVSLTKVMKEELDYALTKEMPDMKNDEWVEVDISSIMVRLISRISARVFLGPEHCRNQEWLTTTAEYSESLFITGFILRVVPHILRPFIAPLLPSYRTLLRNVSSGRRVIGDIIRSQQGDGNEDILSWMRDAATGEEKQIDNIAQRMLILSLASIHTTAMTMTHAMYDLCACPEYIEPLRDEVKSVVGASGWDKTALNRFHKLDSFLKESQRFNPVFLLTFNRIYHQSMTLSDGTNIPSGTRIAVPSHAMLQDSAHVPGPTPPTEFDGFRYSKIRSDSNYAQKYLFSMTDSSNMAFGYGKYACPGRFYASNEMKLTLAILLLQFEFKLPDGKGRPRNITIDSDMIPDPRARLCVRKRSLRDE.

Residues 6–26 (VHWLIYVAFGAWLCSYVIHVL) form a helical membrane-spanning segment. Asn240 is a glycosylation site (N-linked (GlcNAc...) asparagine). Cys441 serves as a coordination point for heme. Residue Asn475 is glycosylated (N-linked (GlcNAc...) asparagine).

The protein belongs to the cytochrome P450 family. Heme serves as cofactor.

The protein resides in the membrane. It catalyses the reaction ent-kaur-16-ene + 3 reduced [NADPH--hemoprotein reductase] + 3 O2 = ent-kaur-16-en-19-oate + 3 oxidized [NADPH--hemoprotein reductase] + 4 H2O + 4 H(+). It functions in the pathway plant hormone biosynthesis; gibberellin biosynthesis. Its function is as follows. Ent-kaurene oxidase; part of the gene cluster that mediates the biosynthesis of gibberellins (GAs), diterpenoids that may provide a selective advantage during infection of the preferred host plant, rice. Gibberellins (GAs) are diterpenoids and are synthesized via the mevalonate pathway. Biosynthesis of the major metabolite GA3 (gibberellic acid) from geranylgeranyl diphosphate (GGPP) requires 13 steps. The GGPP produced by the geranylgeranyl diphosphate synthase GGS2 is converted to ent-kaurene via ent-copalyldiphosphate in a two-step cyclization reaction performed by the bifunctional ent-copalyl diphosphate synthase/ent-kaurene synthase enzyme (CPS/KS). Ent-Kaurene is metabolized to GAs by a series of oxidation reactions catalyzed by cytochrome P450 monooxygenases. Cytochrome P450 monooxygenase P450-4 is an ent-kaurene oxidase that catalyzes the three oxidation steps between ent-kaurene and ent-kaurenoic acid. The highly multifunctional cytochrome P450 monooxygenase P450-1 then catalyzes four steps involving oxidation at two carbon atoms, in the main pathway from ent-kaurenoic acid to GA14 via GA12-aldehyde as well as producing kaurenolides and fujenoic acids as by-products. The cytochrome P450 monooxygenase P450-2 then converts GA14 to GA4 by removal of C-20. GA4 is further converted to GA7 by the GA4 desaturase DES via 1,2-desaturation before cytochrome P450 monooxygenase P450-3, a 13-hydroxylase, hydroxylates GA7 to GA3, the final product of the GA-biosynthetic pathway. The chain is Ent-kaurene oxidase P450-4 from Gibberella fujikuroi (strain CBS 195.34 / IMI 58289 / NRRL A-6831) (Bakanae and foot rot disease fungus).